Here is a 525-residue protein sequence, read N- to C-terminus: Serine/threonine protein phosphatase 2A 55 kDa regulatory subunit B beta isoform (525 aa).

Residues 1 to 31 (MDPFSKSPDDDDLRPEAEAARRPQPQPQPRE) are disordered. WD repeat units follow at residues 48–87 (QEVD…DSAS) and 124–165 (EIEE…VKRI). Residues 169-191 (NLNTSQSSGNGTTSSSSSSSSRA) form a disordered region. The segment covering 171 to 189 (NTSQSSGNGTTSSSSSSSS) has biased composition (low complexity). WD repeat units follow at residues 244 to 282 (AHDY…QSFN), 293 to 333 (DLTE…LCDN), 352 to 390 (EIIA…GPVA), and 495 to 525 (DLST…MYYA).

This sequence belongs to the phosphatase 2A regulatory subunit B family. In terms of assembly, PP2A consists of a common heteromeric enzyme, composed of a catalytic subunit (subunits C), a constant regulatory subunit (subunit A), and a variety of regulatory subunits such as subunits B (the R2/B/PR55/B55, R3/B''/PR72/PR130/PR59 and R5/B'/B56 families).

Functionally, the B regulatory subunit may modulate substrate selectivity and catalytic activity, and may also direct the localization of the catalytic enzyme to a particular subcellular compartment. The chain is Serine/threonine protein phosphatase 2A 55 kDa regulatory subunit B beta isoform from Oryza sativa subsp. indica (Rice).